The primary structure comprises 306 residues: Ornithine carbamoyltransferase, anabolic (306 aa).

Residues 46-49 (STRT), Q73, R97, and 124-127 (HPTQ) contribute to the carbamoyl phosphate site. L-ornithine is bound by residues N156, D220, and 224–225 (SM). Carbamoyl phosphate contacts are provided by residues 260 to 261 (CL) and R288.

The protein belongs to the aspartate/ornithine carbamoyltransferase superfamily. OTCase family. In terms of assembly, homohexamer; dimer of trimers.

The protein localises to the cytoplasm. The catalysed reaction is carbamoyl phosphate + L-ornithine = L-citrulline + phosphate + H(+). It participates in amino-acid biosynthesis; L-arginine biosynthesis; L-arginine from L-ornithine and carbamoyl phosphate: step 1/3. Functionally, reversibly catalyzes the transfer of the carbamoyl group from carbamoyl phosphate (CP) to the N(epsilon) atom of ornithine (ORN) to produce L-citrulline, which is a substrate for argininosuccinate synthetase (ArgG) involved in the final step in arginine biosynthesis. The protein is Ornithine carbamoyltransferase, anabolic of Campylobacter jejuni subsp. jejuni serotype O:2 (strain ATCC 700819 / NCTC 11168).